The following is a 66-amino-acid chain: Period circadian protein (66 aa).

The tract at residues 1–66 (EGSGGSGSSG…VTLTESLLNK (66 aa)) is disordered. Positions 9 to 31 (SGNFTTGSNIHMSSVTNTSNAGT) are enriched in low complexity. 4 repeat units span residues 30 to 31 (GT), 32 to 33 (GT), 35 to 36 (GT), and 37 to 38 (GN). The segment at 30 to 53 (GTGTSGTGNSGGGSGGGTGPGSGA) is 4 X 2 AA tandem repeats of G-[TN]. Over residues 32–51 (GTSGTGNSGGGSGGGTGPGS) the composition is skewed to gly residues.

In terms of assembly, forms a heterodimer with timeless (TIM); the complex then translocates into the nucleus. Post-translationally, phosphorylated with a circadian rhythmicity, probably by the double-time protein (dbt). Phosphorylation could be implicated in the stability of per monomer and in the formation of heterodimer per-tim.

The protein localises to the nucleus. It is found in the cytoplasm. It localises to the perinuclear region. Functionally, essential for biological clock functions. Determines the period length of circadian and ultradian rhythms; an increase in PER dosage leads to shortened circadian rhythms and a decrease leads to lengthened circadian rhythms. Essential for the circadian rhythmicity of locomotor activity, eclosion behavior, and for the rhythmic component of the male courtship song that originates in the thoracic nervous system. The biological cycle depends on the rhythmic formation and nuclear localization of the TIM-PER complex. Light induces the degradation of TIM, which promotes elimination of PER. Nuclear activity of the heterodimer coordinatively regulates PER and TIM transcription through a negative feedback loop. Behaves as a negative element in circadian transcriptional loop. Does not appear to bind DNA, suggesting indirect transcriptional inhibition. This is Period circadian protein (per) from Drosophila saltans (Fruit fly).